Reading from the N-terminus, the 1064-residue chain is Serine protease inhibitor Kazal-type 5 (1064 aa).

Residues 1-22 form the signal peptide; sequence MKIATVSVLLPLALCLIQDAAS. The Kazal-like 1; atypical domain maps to 28–66; sequence EMCHEFQAFMKNGKLFCPQDKKFFQSLDGIMFINKCATC. 21 disulfide bridges follow: cysteine 30-cysteine 66, cysteine 44-cysteine 63, cysteine 97-cysteine 133, cysteine 111-cysteine 130, cysteine 119-cysteine 151, cysteine 161-cysteine 197, cysteine 175-cysteine 194, cysteine 225-cysteine 261, cysteine 239-cysteine 258, cysteine 297-cysteine 333, cysteine 311-cysteine 330, cysteine 367-cysteine 403, cysteine 381-cysteine 400, cysteine 437-cysteine 473, cysteine 451-cysteine 470, cysteine 496-cysteine 532, cysteine 510-cysteine 529, cysteine 567-cysteine 603, cysteine 581-cysteine 600, cysteine 632-cysteine 668, and cysteine 646-cysteine 665. 14 consecutive Kazal-like domains span residues 91 to 153, 155 to 216, 219 to 285, 291 to 352, 361 to 423, 431 to 489, 490 to 551, 561 to 622, 626 to 688, 701 to 757, 768 to 830, 843 to 905, 910 to 971, and 987 to 1048; these read APTE…ECKS, NPEQ…ETRI, NAEK…KAEE, REIV…ARAR, TSYA…KSRN, ASFE…KAKR, EAAK…EEKG, EAVQ…PRAK, EAEK…EDQR, GNTQ…KNEY, ESGK…EDRS, NDKE…EKSS, NNAK…EKPS, and SLDS…KCEE. Residues 676–688 show a composition bias toward basic and acidic residues; the sequence is NEERKRKEEEDQR. A disordered region spans residues 676–705; sequence NEERKRKEEEDQRNAAGHGSSGGGGGNTQD. 6 cysteine pairs are disulfide-bonded: cysteine 707-cysteine 743, cysteine 721-cysteine 740, cysteine 774-cysteine 810, cysteine 788-cysteine 807, cysteine 849-cysteine 885, and cysteine 863-cysteine 882. Positions 751-775 are disordered; that stretch reads AERKNEYSRSRSNGTGSESGKDTCD. Residues 818 to 849 are disordered; it reads AAEKKKKEDEDRSNTGERSNTGERSNDKEDLC. Residues 895-905 show a composition bias toward basic and acidic residues; that stretch reads ERKKKDEEKSS. Positions 895–915 are disordered; that stretch reads ERKKKDEEKSSSKPSNNAKDE. 2 disulfides stabilise this stretch: cysteine 916–cysteine 952 and cysteine 930–cysteine 949. Residues 967–977 are compositionally biased toward basic and acidic residues; it reads QEKPSHVRASQ. The segment at 967-987 is disordered; it reads QEKPSHVRASQEEDSPDSFSS. 3 disulfide bridges follow: cysteine 993–cysteine 1028, cysteine 1006–cysteine 1025, and cysteine 1014–cysteine 1046. The tract at residues 1041-1064 is disordered; the sequence is RSTGKCEESSTPGTTAASMPPSDE.

Post-translationally, proteolytically processed by furin in individual domains (D1, D5, D6, D8 through D11, and D9 through D15) exhibiting various inhibitory potentials for multiple proteases. As to expression, highly expressed in the thymus and stratum corneum. Also found in the oral mucosa, parathyroid gland, Bartholin's glands, tonsils, and vaginal epithelium. Very low levels are detected in lung, kidney, and prostate.

It is found in the secreted. Serine protease inhibitor, probably important for the anti-inflammatory and/or antimicrobial protection of mucous epithelia. Contribute to the integrity and protective barrier function of the skin by regulating the activity of defense-activating and desquamation-involved proteases. Inhibits KLK5, it's major target, in a pH-dependent manner. Inhibits KLK7, KLK14 CASP14, and trypsin. The chain is Serine protease inhibitor Kazal-type 5 (SPINK5) from Homo sapiens (Human).